The following is a 314-amino-acid chain: Transmembrane protein 178B (314 aa).

The signal sequence occupies residues 1 to 24 (MRLLAGAGLCLALAALALLAVALS). The disordered stretch occupies residues 32–83 (DARRHRDRCRKPGGKRNDPGYMYTPGQHLPLRGEPPSSRIRSPRGGEPGGVR). Residues 36–45 (HRDRCRKPGG) show a composition bias toward basic residues. The next 3 membrane-spanning stretches (helical) occupy residues 194–214 (AGFI…GVLG), 228–248 (LLFL…VAGI), and 274–294 (MFCA…CTLA).

It belongs to the TMEM178 family.

The protein resides in the membrane. The chain is Transmembrane protein 178B (tmem178b) from Xenopus tropicalis (Western clawed frog).